The sequence spans 108 residues: UPF0060 membrane protein SH0717 (108 aa).

The next 4 helical transmembrane spans lie at Ile5–Trp25, Ser31–Phe51, Val60–Asp80, and Lys86–Ser106.

This sequence belongs to the UPF0060 family.

The protein localises to the cell membrane. In Staphylococcus haemolyticus (strain JCSC1435), this protein is UPF0060 membrane protein SH0717.